Here is a 161-residue protein sequence, read N- to C-terminus: Allophycocyanin alpha chain (161 aa).

N4-methylasparagine is present on N71. C81 contributes to the (2R,3E)-phycocyanobilin binding site.

This sequence belongs to the phycobiliprotein family. Heterodimer of an alpha and a beta chain. Post-translationally, contains one covalently linked phycocyanobilin chromophore.

It localises to the plastid. It is found in the chloroplast thylakoid membrane. In terms of biological role, light-harvesting photosynthetic bile pigment-protein from the phycobiliprotein complex. Allophycocyanin has a maximum absorption at approximately 650 nanometers. The sequence is that of Allophycocyanin alpha chain (apcA) from Pyropia haitanensis (Red seaweed).